Consider the following 289-residue polypeptide: Energy-coupling factor transporter ATP-binding protein EcfA2 (289 aa).

One can recognise an ABC transporter domain in the interval 7–251 (IILDNVSYTY…IELLTKIEID (245 aa)). Residue 44–51 (GTTGSGKS) participates in ATP binding.

The protein belongs to the ABC transporter superfamily. Energy-coupling factor EcfA family. Forms a stable energy-coupling factor (ECF) transporter complex composed of 2 membrane-embedded substrate-binding proteins (S component), 2 ATP-binding proteins (A component) and 2 transmembrane proteins (T component).

Its subcellular location is the cell membrane. ATP-binding (A) component of a common energy-coupling factor (ECF) ABC-transporter complex. Unlike classic ABC transporters this ECF transporter provides the energy necessary to transport a number of different substrates. The sequence is that of Energy-coupling factor transporter ATP-binding protein EcfA2 from Mycoplasma capricolum subsp. capricolum (strain California kid / ATCC 27343 / NCTC 10154).